Here is a 387-residue protein sequence, read N- to C-terminus: 26S proteasome regulatory subunit 6B homolog (387 aa).

An ATP-binding site is contributed by 175–182; sequence GPPGTGKT.

It belongs to the AAA ATPase family. As to quaternary structure, the 26S proteasome consists of a 20S proteasome core and two 19S regulatory subunits. The 20S proteasome core is composed of 28 subunits that are arranged in four stacked rings, resulting in a barrel-shaped structure. The two end rings are each formed by seven alpha subunits, and the two central rings are each formed by seven beta subunits. The catalytic chamber with the active sites is on the inside of the barrel.

The protein localises to the cytoplasm. The protein resides in the nucleus. In terms of biological role, acts as a regulatory subunit of the 26S proteasome which degrades poly-ubiquitinated proteins in the cytoplasm and in the nucleus. It is essential for the regulated turnover of proteins and for the removal of misfolded proteins. The proteasome is a multicatalytic proteinase complex that is characterized by its ability to cleave peptides with Arg, Phe, Tyr, Leu, and Glu adjacent to the leaving group at neutral or slightly basic pH. The chain is 26S proteasome regulatory subunit 6B homolog from Encephalitozoon cuniculi (strain GB-M1) (Microsporidian parasite).